Here is a 488-residue protein sequence, read N- to C-terminus: Putative serine carboxypeptidase-like 30 (488 aa).

A signal peptide spans 1-28; sequence MDNHTKSFSSLLISLWFTALLILVEMVS. Intrachain disulfides connect cysteine 99-cysteine 368, cysteine 262-cysteine 275, and cysteine 299-cysteine 336. An N-linked (GlcNAc...) asparagine glycan is attached at asparagine 150. Serine 192 is a catalytic residue. Asparagine 263 carries an N-linked (GlcNAc...) asparagine glycan. Asparagine 364 and asparagine 375 each carry an N-linked (GlcNAc...) asparagine glycan. Active-site residues include aspartate 405 and histidine 457.

This sequence belongs to the peptidase S10 family. In terms of tissue distribution, expression not detected.

It is found in the secreted. Probable carboxypeptidase. This chain is Putative serine carboxypeptidase-like 30 (SCPL30), found in Arabidopsis thaliana (Mouse-ear cress).